Consider the following 730-residue polypeptide: MPDPSTYRPATGTIPAAPGVYKFRDPHGRVIYVGKAKSLRSRLNSYFADVTTLHPRTRQMVTTAGSVEWTVVSTEVEALQLEYNWIKEFDPRFNVRYRDDKTYPVLAVTLNEEFPRLFVYRGPRRKGVRYFGPYSHAWAIRETLDLLLRVFPARTCSSGVFKRHNQIGRPCLLGYIDKCSAPCVGRVSAEEHRQIVEDFCDFLAGRTDKLVKDLEKRMQQASEDLDFETAARLRDDIGALRKALEKQAVVLGDGTDADLVAFATDDLEAAVQVFHVRGGRVRGQRGWVVEKAGDAIDWAALDAESDLPILVEQFLTQFYGEQAALDPGAGSEAGISAVPKEVLVPVLPANATEIQAWLSKLRGSQVQLRVPQRGDKKDLAETVQRNAKEALAQHKLKRAGDFTSRSAALQGIQEALDLDSAPLRIECIDISHVQGTDVVASLVVFEDGLPRKSDYRHYAIKEAAGDGHSDDVASIAEITRRRFIRHNRDLGILAASASTMDADGGDLAPEAAIDPATGRPRRFAYPPNLFVVDGGAPQVTAAAAVLDELGVTDVAVVGLAKRLEEVWVPGEEDPVILPRTSESLYLLQRIRDEAHRFAITFHRSKRSRRMTASALDSVKGLGETRRTALVAHFGSVAKLKTATVEEIMQVPGIGETTATAVLAALGTDSAAADAGAEARALPAAVGDDELDKESESSVTSADAPSAESGSGDEGSESRELSMPTTGPSAQ.

Residues 16-95 enclose the GIY-YIG domain; that stretch reads AAPGVYKFRD…IKEFDPRFNV (80 aa). The UVR domain maps to 208 to 243; sequence DKLVKDLEKRMQQASEDLDFETAARLRDDIGALRKA. The interval 678 to 730 is disordered; that stretch reads ARALPAAVGDDELDKESESSVTSADAPSAESGSGDEGSESRELSMPTTGPSAQ.

It belongs to the UvrC family. Interacts with UvrB in an incision complex.

Its subcellular location is the cytoplasm. Functionally, the UvrABC repair system catalyzes the recognition and processing of DNA lesions. UvrC both incises the 5' and 3' sides of the lesion. The N-terminal half is responsible for the 3' incision and the C-terminal half is responsible for the 5' incision. The sequence is that of UvrABC system protein C from Rhodococcus erythropolis (strain PR4 / NBRC 100887).